The primary structure comprises 150 residues: Globin-1 (150 aa).

The Globin domain maps to 11–150 (ALTAAEKATI…MICILLRSSY (140 aa)). Residues His74 and His106 each contribute to the heme b site.

It belongs to the globin family. In terms of assembly, monomer.

This is Globin-1 from Petromyzon marinus (Sea lamprey).